The sequence spans 160 residues: Sulfur-rich protein (160 aa).

The next 2 membrane-spanning stretches (helical) occupy residues 63-83 (ITMI…TFVL) and 92-112 (FLFL…SVFM).

The protein localises to the membrane. The polypeptide is Sulfur-rich protein (srp) (Chlamydia abortus (strain DSM 27085 / S26/3) (Chlamydophila abortus)).